We begin with the raw amino-acid sequence, 250 residues long: Leucyl/phenylalanyl-tRNA--protein transferase (250 aa).

Belongs to the L/F-transferase family.

It is found in the cytoplasm. The enzyme catalyses N-terminal L-lysyl-[protein] + L-leucyl-tRNA(Leu) = N-terminal L-leucyl-L-lysyl-[protein] + tRNA(Leu) + H(+). It carries out the reaction N-terminal L-arginyl-[protein] + L-leucyl-tRNA(Leu) = N-terminal L-leucyl-L-arginyl-[protein] + tRNA(Leu) + H(+). It catalyses the reaction L-phenylalanyl-tRNA(Phe) + an N-terminal L-alpha-aminoacyl-[protein] = an N-terminal L-phenylalanyl-L-alpha-aminoacyl-[protein] + tRNA(Phe). Functionally, functions in the N-end rule pathway of protein degradation where it conjugates Leu, Phe and, less efficiently, Met from aminoacyl-tRNAs to the N-termini of proteins containing an N-terminal arginine or lysine. This Cupriavidus taiwanensis (strain DSM 17343 / BCRC 17206 / CCUG 44338 / CIP 107171 / LMG 19424 / R1) (Ralstonia taiwanensis (strain LMG 19424)) protein is Leucyl/phenylalanyl-tRNA--protein transferase.